Here is a 689-residue protein sequence, read N- to C-terminus: Elongation factor G (689 aa).

Residues 9 to 283 (AKFRNIGIMA…AIIEFMPSPL (275 aa)) enclose the tr-type G domain. Residues 18–25 (AHIDAGKT), 82–86 (DTPGH), and 136–139 (NKMD) each bind GTP.

This sequence belongs to the TRAFAC class translation factor GTPase superfamily. Classic translation factor GTPase family. EF-G/EF-2 subfamily.

Its subcellular location is the cytoplasm. In terms of biological role, catalyzes the GTP-dependent ribosomal translocation step during translation elongation. During this step, the ribosome changes from the pre-translocational (PRE) to the post-translocational (POST) state as the newly formed A-site-bound peptidyl-tRNA and P-site-bound deacylated tRNA move to the P and E sites, respectively. Catalyzes the coordinated movement of the two tRNA molecules, the mRNA and conformational changes in the ribosome. The protein is Elongation factor G of Clostridium botulinum (strain ATCC 19397 / Type A).